We begin with the raw amino-acid sequence, 684 residues long: Threonine--tRNA ligase (684 aa).

Residues 1–66 (MTVPATDSCP…DTDAEVVPVA (66 aa)) form the TGS domain. The interval 261 to 567 (DHRKLGSELD…LTEHYAGAFP (307 aa)) is catalytic. Cys366, His417, and His544 together coordinate Zn(2+).

The protein belongs to the class-II aminoacyl-tRNA synthetase family. In terms of assembly, homodimer. Requires Zn(2+) as cofactor.

Its subcellular location is the cytoplasm. The catalysed reaction is tRNA(Thr) + L-threonine + ATP = L-threonyl-tRNA(Thr) + AMP + diphosphate + H(+). Catalyzes the attachment of threonine to tRNA(Thr) in a two-step reaction: L-threonine is first activated by ATP to form Thr-AMP and then transferred to the acceptor end of tRNA(Thr). Also edits incorrectly charged L-seryl-tRNA(Thr). The polypeptide is Threonine--tRNA ligase (Mycolicibacterium paratuberculosis (strain ATCC BAA-968 / K-10) (Mycobacterium paratuberculosis)).